A 249-amino-acid chain; its full sequence is Putative type I specificity subunit S.MpnORF615P (249 aa).

Belongs to the type-I restriction system S methylase family. As to quaternary structure, the methyltransferase is composed of M and S polypeptides.

The specificity (S) subunit of a type I methyltransferase (MTase); this subunit dictates DNA sequence specificity. The single R subunit has multiple frameshifts and is probably not expressed. This chain is Putative type I specificity subunit S.MpnORF615P, found in Mycoplasma pneumoniae (strain ATCC 29342 / M129 / Subtype 1) (Mycoplasmoides pneumoniae).